The chain runs to 1256 residues: Muramidase-released protein (1256 aa).

Residues methionine 1 to alanine 47 form the signal peptide. Small repeat units follow at residues lysine 663–lysine 681 and lysine 839–lysine 861. Disordered regions lie at residues proline 873 to proline 949, glycine 967 to threonine 994, and lysine 1028 to lysine 1049. A Large repeat occupies valine 953–lysine 1006. Over residues aspartate 1033–threonine 1045 the composition is skewed to polar residues. A Small repeat occupies arginine 1064–tyrosine 1084. Large repeat units lie at residues threonine 1089–lysine 1142 and threonine 1143–lysine 1195. Positions glutamate 1102–threonine 1137 are disordered. The tract at residues leucine 1196–alanine 1229 is disordered. Residues leucine 1223 to glycine 1227 carry the LPXTG sorting signal motif. The residue at position 1226 (threonine 1226) is a Pentaglycyl murein peptidoglycan amidated threonine. A propeptide spans glycine 1227–aspartate 1256 (removed by sortase).

The protein resides in the secreted. It localises to the cell wall. In Streptococcus suis, this protein is Muramidase-released protein (mrp).